Reading from the N-terminus, the 463-residue chain is L-seryl-tRNA(Sec) selenium transferase (463 aa).

K295 carries the N6-(pyridoxal phosphate)lysine modification.

Belongs to the SelA family. Homodecamer; pentamer of dimers. Binds only one seryl-tRNA(Sec) per dimer. It depends on pyridoxal 5'-phosphate as a cofactor.

It localises to the cytoplasm. It catalyses the reaction L-seryl-tRNA(Sec) + selenophosphate + H(+) = L-selenocysteinyl-tRNA(Sec) + phosphate. It participates in aminoacyl-tRNA biosynthesis; selenocysteinyl-tRNA(Sec) biosynthesis; selenocysteinyl-tRNA(Sec) from L-seryl-tRNA(Sec) (bacterial route): step 1/1. In terms of biological role, converts seryl-tRNA(Sec) to selenocysteinyl-tRNA(Sec) required for selenoprotein biosynthesis. The polypeptide is L-seryl-tRNA(Sec) selenium transferase (Escherichia coli O127:H6 (strain E2348/69 / EPEC)).